A 188-amino-acid chain; its full sequence is Peptidyl-tRNA hydrolase (188 aa).

F15 lines the tRNA pocket. H20 (proton acceptor) is an active-site residue. Residues Y64, N66, and N112 each contribute to the tRNA site.

Belongs to the PTH family. In terms of assembly, monomer.

Its subcellular location is the cytoplasm. It carries out the reaction an N-acyl-L-alpha-aminoacyl-tRNA + H2O = an N-acyl-L-amino acid + a tRNA + H(+). Its function is as follows. Hydrolyzes ribosome-free peptidyl-tRNAs (with 1 or more amino acids incorporated), which drop off the ribosome during protein synthesis, or as a result of ribosome stalling. Functionally, catalyzes the release of premature peptidyl moieties from peptidyl-tRNA molecules trapped in stalled 50S ribosomal subunits, and thus maintains levels of free tRNAs and 50S ribosomes. The sequence is that of Peptidyl-tRNA hydrolase from Borrelia recurrentis (strain A1).